A 3526-amino-acid chain; its full sequence is MNMVKRIMGRPRQEECSPQDNALGLMHLRRLFTELCHPPRHMTQKEQEEKLYMMLPVFNRVFGNAPPNTMTEKFSDLLQFTTQVSRLMVTEIRRRASNKSTEAASRAIVQFLEINQSEEASRGWMLLTTINLLASSGQKTVDCMTTMSVPSTLVKCLYLFFDLPHVPEAVGGAQNELPLAERRGLLQKVFVQILVKLCSFVSPAEELAQKDDLQLLFSAITSWCPPYNLPWRKSAGEVLMTISRHGLSVNVVKYIHEKECLSTCVQNMQQSDDLSPLEIVEMFAGLSCFLKDSSDVSQTLLDDFRIWQGYNFLCDLLLRLEQAKEAESKDALKDLVNLITSLTTYGVSELKPAGITTGAPFLLPGFAVPQPAGKGHSVRNVQAFAVLQNAFLKAKTSFLAQIILDAITNIYMADNANYFILESQHTLSQFAEKISKLPEVQNKYFEMLEFVVFSLNYIPCKELISVSILLKSSSSYHCSIIAMKTLLKFTRHDYIFKDVFREVGLLEVMVNLLHKYAALLKDPTQALNEQGDSRNNSSVEDQKHLALLVMETLTVLLQGSNTNAGIFREFGGARCAHNIVKYPQCRQHALMTIQQLVLSPNGDDDMGTLLGLMHSAPPTELQLKTDILRALLSVLRESHRSRTVFRKVGGFVYITSLLVAMERSLSCPPKNGWEKVNQNQVFELLHTVFCTLTAAMRYEPANSHFFKTEIQYEKLADAVRFLGCFSDLRKISAMNVFPSNTQPFQRLLEEDVISIESVSPTLRHCSKLFIYLYKVATDSFDSRAEQIPPCLTSESSLPSPWGTPALSRKRHAYHSVSTPPVYPPKNVADLKLHVTTSSLQSSDAVIIHPGAMLAMLDLLASVGSVTQPEHALDLQLAVANILQSLVHTERNQQVMCEAGLHARLLQRCSAALADEDHSLHPPLQRMFERLASQALEPMVLREFLRLASPLNCGAWDKKLLKQYRVHKPSSLSYEPEMRSSMITSLEGLGTDNVFSLHEDNHYRISKSLVKSAEGSTVPLTRVKCLVSMTTPHDIRLHGSSVTPAFVEFDTSLEGFGCLFLPSLAPHNAPTNNTVTTGLIDGAVVSGIGSGERFFPPPSGLSYSSWFCIEHFSSPPNNHPVRLLTVVRRANSSEQHYVCLAIVLSAKDRSLIVSTKEELLQNYVDDFSEESSFYEILPCCARFRCGELIIEGQWHHLVLVMSKGMLKNSTAALYIDGQLVNTVKLHYVHSTPGGSGSANPPVVSTVYAYIGTPPAQRQIASLVWRLGPTHFLEEVLPSSNVTTIYELGPNYVGSFQAVCMPCKDAKSEGVVPSPVSLVPEEKVSFGLYALSVSSLTVARIRKVYNKLDSKAIAKQLGISSHENATPVKLIHNSAGHLNGSARTIGAALIGYLGVRTFVPKPVATTLQYVGGAAAILGLVAMASDVEGLYAAVKALVCVVKSNPLASKEMERIKGYQLLAMLLKKKRSLLNSHILHLTFSLVGTVDSGHETSIIPNSTAFQDLLCDFEVWLHAPYELHLSLFEHFIELLTESSEASKNAKLMREFQLIPKLLLTLRDMSLSQPTIAAISNVLSFLLQGFPSSNDLLRFGQFISSTLPTFAVCEKFVVMEINNEEKLDTGTEEEFGGLVSANLILLRNRLLDILLKLIYTSKEKTSINLQACEELVKTLGFDWIMMFMEEHLHSTTVTAAMRILVVLLSNQSILIKFKEGLSGGGWLEQTDSVLTNKIGTVLGFNVGRSAGGRSTVREINRDACHFPGFPVLQSFLPKHTNVPALYFLLMALFLQQPVSELPENLQVSVPVISCRSKQGCQFDLDSIWTFIFGVPASSGTVVSSIHNVCTEAVFLLLGMLRSMLTSPWQSEEEGSWLREYPVTLMQFFRYLYHNVPDLASMWMSPDFLCALAATVFPFNIRPYSEMVTDLDDEVGSPAEEFKAFAADTGMNRSQSEYCNVGTKTYLTNHPAKKFVFDFMRVLIIDNLCLTPASKQTPLIDLLLEASPERSTRTQQKEFQTYILDSVMDHLLAADVLLGEDASLPITSGGSYQVLVNNVFYFTQRVVDKLWQGMFNKESKLLIDFIIQLIAQSKRRSQGLSLDAVYHCLNRTILYQFSRAHKTVPQQVALLDSLRVLTVNRNLILGPGNHDQEFISCLAHCLINLHVGSNVDGFGLEAEARMTTWHIMIPSDIEPDGSYSQDISEGRQLLIKAVNRVWTELIHSKKQVLEELFKVTLPVNERGHVDIATARPLIEEAALKCWQNHLAHEKKCISRGEALAPTTQSKLSRVSSGFGLSKLTGSRRNRKESGLNKHSLSTQEISQWMFTHIAVVRDLVDTQYKEYQERQQNALKYVTEEWCQIECELLRERGLWGPPIGSHLDKWMLEMTEGPCRMRKKMVRNDMFYNHYPYVPETEQETNVASEIPSKQPETPDDIPQKKPARYRRAVSYDSKEYYMRLASGNPAIVQDAIVESSEGEAAQQEPEHGEDTIAKVKGLVKPPLKRSRSAPDGGDEENQEQLQDQIAEGSSIEEEEKTDNATLLRLLEEGEKIQHMYRCARVQGLDTSEGLLLFGKEHFYVIDGFTMTATREIRDIETLPPNMHEPIIPRGARQGPSQLKRTCSIFAYEDIKEVHKRRYLLQPIAVEVFSGDGRNYLLAFQKGIRNKVYQRFLAVVPSLTDSSESVSGQRPNTSVEQGSGLLSTLVGEKSVTQRWERGEISNFQYLMHLNTLAGRSYNDLMQYPVFPWILADYDSEEVDLTNPKTFRNLAKPMGAQTDERLAQYKKRYKDWEDPNGETPAYHYGTHYSSAMIVASYLVRMEPFTQIFLRLQGGHFDLADRMFHSVREAWYSASKHNMADVKELIPEFFYLPEFLFNSNNFDLGCKQNGTKLGDVILPPWAKGDPREFIRVHREALECDYVSAHLHEWIDLIFGYKQQGPAAVEAVNVFHHLFYEGQVDIYNINDPLKETATIGFINNFGQIPKQLFKKPHPPKRVRSRLNGDNAGISVLPGSTSDKIFFHHLDNLRPSLTPVKELKEPVGQIVCTDKGILAVEQNKVLIPPTWNKTFAWGYADLSCRLGTYESDKAMTVYECLSEWGQILCAICPNPKLVITGGTSTVVCVWEMGTSKEKAKTVTLKQALLGHTDTVTCATASLAYHIIVSGSRDRTCIIWDLNKLSFLTQLRGHRAPVSALCINELTGDIVSCAGTYIHVWSINGNPIVSVNTFTGRSQQIICCCMSEMNEWDTQNVIVTGHSDGVVRFWRMEFLQVPETPAPEPAEVLEMQEDCPEAQIGQEAQDEDSSDSEADEQSISQDPKDTPSQPSSTSHRPRAASCRATAAWCTDSGSDDSRRWSDQLSLDEKDGFIFVNYSEGQTRAHLQGPLSHPHPNPIEVRNYSRLKPGYRWERQLVFRSKLTMHTAFDRKDNAHPAEVTALGISKDHSRILVGDSRGRVFSWSVSDQPGRSAADHWVKDEGGDSCSGCSVRFSLTERRHHCRNCGQLFCQKCSRFQSEIKRLKISSPVRVCQNCYYNLQHERGSEDGPRNC.

Residues S1942 and S2278 each carry the phosphoserine modification. The tract at residues 2285–2981 (LTGSRRNRKE…PHPPKRVRSR (697 aa)) is sufficient for localization to p62 bodies/ALIS. Disordered regions lie at residues 2403–2429 (ETNV…PARY) and 2459–2522 (SSEG…EKTD). Residues 2468-2477 (EPEHGEDTIA) are compositionally biased toward basic and acidic residues. S2492 is modified (phosphoserine). One can recognise a BEACH-type PH domain in the interval 2531–2656 (EEGEKIQHMY…IRNKVYQRFL (126 aa)). An interaction with SQSTM1 region spans residues 2586 to 3526 (MHEPIIPRGA…RGSEDGPRNC (941 aa)). Positions 2683–2976 (GLLSTLVGEK…QLFKKPHPPK (294 aa)) constitute a BEACH domain. The segment at 2981–3526 (RLNGDNAGIS…RGSEDGPRNC (546 aa)) is interaction with ATG5. WD repeat units lie at residues 3077–3115 (SEWG…EKAK), 3125–3164 (GHTD…FLTQ), 3167–3206 (GHRA…VSVN), and 3210–3254 (GRSQ…VPET). The interval 3272–3335 (AQIGQEAQDE…SGSDDSRRWS (64 aa)) is disordered. The segment covering 3278-3290 (AQDEDSSDSEADE) has biased composition (acidic residues). Residues 3313 to 3363 (AASCRATAAWCTDSGSDDSRRWSDQLSLDEKDGFIFVNYSEGQTRAHLQGP) are interaction with GABARAP. A phosphoserine mark is found at S3335 and S3339. The LC3-interacting region (LIR) signature appears at 3346–3349 (FIFV). The stretch at 3408 to 3447 (AHPAEVTALGISKDHSRILVGDSRGRVFSWSVSDQPGRSA) is one WD 5 repeat. The FYVE-type zinc-finger motif lies at 3454-3514 (DEGGDSCSGC…VCQNCYYNLQ (61 aa)). Zn(2+) contacts are provided by C3460, C3463, C3476, C3479, C3484, C3487, C3506, and C3509.

As to quaternary structure, directly interacts with ATG5 and associates with the ATG12-ATG5-ATG16L complex. Interacts with p62/SQSTM1; this interaction is required to recruit WDFY3 to cytoplasmic bodies and to PML bodies. Directly interacts with GABARAP, GABARAPL1 and GABARAPL2; the interaction with GABARAP is required for WDFY3 recruitment to MAP1LC3B-positive p62/SQSTM1 bodies. Weakly interacts with MAP1LC3C; this interaction is direct. Does not interact with MAP1LC3A, nor MAP1LC3B. Interacts with TRAF6. As to expression, expressed in osteoclast and their mononuclear precursors (at protein level).

The protein resides in the nucleus membrane. It localises to the cytoplasm. It is found in the cytosol. The protein localises to the nucleus. Its subcellular location is the PML body. The protein resides in the membrane. It localises to the perikaryon. It is found in the cell projection. The protein localises to the axon. Its function is as follows. Required for selective macroautophagy (aggrephagy). Acts as an adapter protein by linking specific proteins destined for degradation to the core autophagic machinery members, such as the ATG5-ATG12-ATG16L E3-like ligase, SQSTM1 and LC3. Along with p62/SQSTM1, involved in the formation and autophagic degradation of cytoplasmic ubiquitin-containing inclusions (p62 bodies, ALIS/aggresome-like induced structures). Along with SQSTM1, required to recruit ubiquitinated proteins to PML bodies in the nucleus. Important for normal brain development. Essential for the formation of axonal tracts throughout the brain and spinal cord, including the formation of the major forebrain commissures. Involved in the ability of neural cells to respond to guidance cues. Required for cortical neurons to respond to the trophic effects of netrin-1/NTN1. Regulates Wnt signaling through the removal of DVL3 aggregates, likely in an autophagy-dependent manner. This process may be important for the determination of brain size during embryonic development. May regulate osteoclastogenesis by acting on the TNFSF11/RANKL - TRAF6 pathway. After cytokinetic abscission, involved in midbody remnant degradation. In vitro strongly binds to phosphatidylinositol 3-phosphate (PtdIns3P). The polypeptide is WD repeat and FYVE domain-containing protein 3 (WDFY3) (Homo sapiens (Human)).